A 32-amino-acid chain; its full sequence is Photosystem II reaction center protein Z (32 aa).

The helical transmembrane segment at 12–32 (FGAAAWIGLVLLVGTLYYFVV) threads the bilayer.

It belongs to the PsbZ family. In terms of assembly, PSII is composed of 1 copy each of membrane proteins PsbA, PsbB, PsbC, PsbD, PsbE, PsbF, PsbH, PsbI, PsbJ, PsbK, PsbL, PsbM, PsbT, PsbY, PsbZ, Psb30/Ycf12, at least 3 peripheral proteins of the oxygen-evolving complex and a large number of cofactors. It forms dimeric complexes.

It localises to the plastid. Its subcellular location is the chloroplast thylakoid membrane. May control the interaction of photosystem II (PSII) cores with the light-harvesting antenna, regulates electron flow through the 2 photosystem reaction centers. PSII is a light-driven water plastoquinone oxidoreductase, using light energy to abstract electrons from H(2)O, generating a proton gradient subsequently used for ATP formation. The sequence is that of Photosystem II reaction center protein Z from Euglena granulata.